The chain runs to 749 residues: 5-methyltetrahydropteroyltriglutamate--homocysteine methyltransferase (749 aa).

5-methyltetrahydropteroyltri-L-glutamate is bound by residues 15 to 18 and Lys-114; that span reads RELK. L-homocysteine contacts are provided by residues 425–427 and Glu-478; that span reads IGS. L-methionine-binding positions include 425-427 and Glu-478; that span reads IGS. Trp-555 provides a ligand contact to 5-methyltetrahydropteroyltri-L-glutamate. L-homocysteine is bound at residue Asp-593. Asp-593 serves as a coordination point for L-methionine. 5-methyltetrahydropteroyltri-L-glutamate is bound at residue Glu-599. The Zn(2+) site is built by His-636, Cys-638, and Glu-660. The active-site Proton donor is His-689. Cys-721 is a Zn(2+) binding site.

It belongs to the vitamin-B12 independent methionine synthase family. Requires Zn(2+) as cofactor.

It carries out the reaction 5-methyltetrahydropteroyltri-L-glutamate + L-homocysteine = tetrahydropteroyltri-L-glutamate + L-methionine. The protein operates within amino-acid biosynthesis; L-methionine biosynthesis via de novo pathway; L-methionine from L-homocysteine (MetE route): step 1/1. Catalyzes the transfer of a methyl group from 5-methyltetrahydrofolate to homocysteine resulting in methionine formation. The protein is 5-methyltetrahydropteroyltriglutamate--homocysteine methyltransferase of Streptococcus pneumoniae serotype 4 (strain ATCC BAA-334 / TIGR4).